The chain runs to 423 residues: Acaloleptin A (423 aa).

The signal sequence occupies residues 1–17; that stretch reads MITKISLILFAVLLVSG. A propeptide spanning residues 18 to 26 is cleaved from the precursor; sequence LEEEERWKR. Disordered regions lie at residues 28–58, 108–128, 180–203, and 355–385; these read LQPGAPNVNNNDQPWQVSPHISRDDSGNTKT, INNKDQPWQVSPHISRDDNGN, NVNNKDQPWQVSPHISRDDSGNTR, and SDDEDEEEEEDQPWQLNPNIARGDDGNTRAD. The span at 34 to 43 shows a compositional bias: polar residues; it reads NVNNNDQPWQ. The segment covering 180 to 189 has biased composition (polar residues); the sequence is NVNNKDQPWQ. The segment covering 357-366 has biased composition (acidic residues); sequence DEDEEEEEDQ. A compositionally biased stretch (basic and acidic residues) spans 376–385; it reads RGDDGNTRAD.

This sequence belongs to the coleoptericin family. Hemolymph (at protein level). Larval fat body.

It is found in the secreted. Acaloleptins A1-A4 show antibacterial activity against Gram-negative bacteria but not against Gram-positive bacteria. Acaloleptin A5 shows antibacterial activity against Gram-positive bacteria but not against Gram-negative bacteria, and may also have antifungal activity. The polypeptide is Acaloleptin A (Acalolepta luxuriosa (Udo longhorn beetle)).